Here is a 426-residue protein sequence, read N- to C-terminus: C4-dicarboxylate transport protein (426 aa).

The next 8 membrane-spanning stretches (helical) occupy residues 4–24, 44–64, 76–96, 142–162, 184–204, 222–242, 326–346, and 352–372; these read SIFT…ILLG, LIKM…IAGM, IALL…LVVV, IGAF…MFGF, VIFG…FGAM, LILC…GSIA, IWHQ…AAGV, and IVLA…LALI.

This sequence belongs to the dicarboxylate/amino acid:cation symporter (DAACS) (TC 2.A.23) family.

The protein localises to the cell inner membrane. Its function is as follows. Responsible for the transport of dicarboxylates such as succinate, fumarate, and malate from the periplasm across the membrane. The polypeptide is C4-dicarboxylate transport protein (Edwardsiella ictaluri (strain 93-146)).